Consider the following 246-residue polypeptide: 14-3-3 protein eta (246 aa).

Position 2 is an N-acetylglycine (Gly-2). Phosphoserine occurs at positions 25 and 59.

The protein belongs to the 14-3-3 family. In terms of assembly, homodimer. Interacts with many nuclear hormone receptors and cofactors including AR, ESR1, ESR2, MC2R, NR3C1, NRIP1, PPARBP and THRA. Interacts with ABL1 (phosphorylated form); the interaction retains it in the cytoplasm. Interacts with ARHGEF28 and CDK16. Weakly interacts with CDKN1B. Interacts with GAB2. Interacts with KCNK18 in a phosphorylation-dependent manner. Interacts with SAMSN1. Interacts with the 'Ser-241' phosphorylated form of PDPK1. Interacts with the 'Thr-369' phosphorylated form of DAPK2. Interacts with PI4KB, TBC1D22A and TBC1D22B. Interacts with SLITRK1. Interacts with MEFV. Post-translationally, phosphorylated on Ser-59 by protein kinase C delta type catalytic subunit in a sphingosine-dependent fashion. Expressed mainly in the brain and present in other tissues albeit at lower levels.

In terms of biological role, adapter protein implicated in the regulation of a large spectrum of both general and specialized signaling pathways. Binds to a large number of partners, usually by recognition of a phosphoserine or phosphothreonine motif. Binding generally results in the modulation of the activity of the binding partner. Negatively regulates the kinase activity of PDPK1. The protein is 14-3-3 protein eta (YWHAH) of Homo sapiens (Human).